We begin with the raw amino-acid sequence, 248 residues long: UPF0736 protein BCAH187_A1335 (248 aa).

The protein belongs to the UPF0736 family.

The protein is UPF0736 protein BCAH187_A1335 of Bacillus cereus (strain AH187).